Reading from the N-terminus, the 312-residue chain is 2,3-dihydroxyphenylpropionate/2,3-dihydroxicinnamic acid 1,2-dioxygenase (312 aa).

Histidine 115 (proton donor) is an active-site residue. The Proton acceptor role is filled by histidine 179.

Belongs to the LigB/MhpB extradiol dioxygenase family. As to quaternary structure, homotetramer. The cofactor is Fe(2+).

The catalysed reaction is 3-(2,3-dihydroxyphenyl)propanoate + O2 = (2Z,4E)-2-hydroxy-6-oxonona-2,4-dienedioate + H(+). It carries out the reaction (2E)-3-(2,3-dihydroxyphenyl)prop-2-enoate + O2 = (2Z,4E,7E)-2-hydroxy-6-oxonona-2,4,7-trienedioate + H(+). Its pathway is aromatic compound metabolism; 3-phenylpropanoate degradation. In terms of biological role, catalyzes the non-heme iron(II)-dependent oxidative cleavage of 2,3-dihydroxyphenylpropionic acid and 2,3-dihydroxicinnamic acid into 2-hydroxy-6-ketononadienedioate and 2-hydroxy-6-ketononatrienedioate, respectively. This is 2,3-dihydroxyphenylpropionate/2,3-dihydroxicinnamic acid 1,2-dioxygenase from Azotobacter vinelandii (strain DJ / ATCC BAA-1303).